The primary structure comprises 496 residues: ATP synthase subunit beta, chloroplastic (496 aa).

Gly-170–Thr-177 provides a ligand contact to ATP.

It belongs to the ATPase alpha/beta chains family. As to quaternary structure, F-type ATPases have 2 components, CF(1) - the catalytic core - and CF(0) - the membrane proton channel. CF(1) has five subunits: alpha(3), beta(3), gamma(1), delta(1), epsilon(1). CF(0) has four main subunits: a(1), b(1), b'(1) and c(9-12).

It localises to the plastid. The protein resides in the chloroplast thylakoid membrane. The enzyme catalyses ATP + H2O + 4 H(+)(in) = ADP + phosphate + 5 H(+)(out). Produces ATP from ADP in the presence of a proton gradient across the membrane. The catalytic sites are hosted primarily by the beta subunits. In Trachycarpus fortunei (Chinese windmill palm), this protein is ATP synthase subunit beta, chloroplastic.